The sequence spans 106 residues: Small ribosomal subunit protein bS18 (106 aa).

The interval 1 to 41 (MAEEHSNQRSQTFNGERTNRPSRKPRGDGERRGRRQGGRRR) is disordered.

It belongs to the bacterial ribosomal protein bS18 family. In terms of assembly, part of the 30S ribosomal subunit. Forms a tight heterodimer with protein bS6.

In terms of biological role, binds as a heterodimer with protein bS6 to the central domain of the 16S rRNA, where it helps stabilize the platform of the 30S subunit. The sequence is that of Small ribosomal subunit protein bS18 from Oenococcus oeni (strain ATCC BAA-331 / PSU-1).